We begin with the raw amino-acid sequence, 328 residues long: Malate dehydrogenase (328 aa).

11–17 (GAAGQIG) lines the NAD(+) pocket. 2 residues coordinate substrate: Arg94 and Arg100. Residues Asn107, Gln114, and 131–133 (VGN) contribute to the NAD(+) site. Substrate is bound by residues Asn133 and Arg164. His189 serves as the catalytic Proton acceptor.

Belongs to the LDH/MDH superfamily. MDH type 2 family.

The catalysed reaction is (S)-malate + NAD(+) = oxaloacetate + NADH + H(+). Functionally, catalyzes the reversible oxidation of malate to oxaloacetate. This chain is Malate dehydrogenase, found in Xanthomonas oryzae pv. oryzae (strain PXO99A).